The chain runs to 557 residues: CCR4-NOT transcription complex subunit 6 (557 aa).

LRR repeat units lie at residues 52-73, 75-96, 98-120, and 121-143; these read HLTA…IAKL, NLVY…LGNM, SLRE…GKLF, and QLQT…CLEP. The interval 153 to 557 is nuclease domain; the sequence is LLDNLSGTAK…VNGIHLPGRR (405 aa). Mg(2+) is bound at residue glutamate 240. Positions 240, 276, 361, and 366 each coordinate substrate. Position 412 (aspartate 412) interacts with Mg(2+). Catalysis depends on aspartate 412, which acts as the Proton donor/acceptor. Substrate contacts are provided by asparagine 414, asparagine 481, and phenylalanine 486.

This sequence belongs to the CCR4/nocturin family. In terms of assembly, component of the CCR4-NOT complex; distinct complexes seem to exist that differ in the participation of probably mutually exclusive catalytic subunits; the complex contains two deadenylase subunits, CNOT6 or CNOT6L, and CNOT7 or CNOT8. Interacts with CNOT7 and CNOT8. Interacts with UNR. Interacts with ZFP36L1 (via N-terminus). Interacts with ZNF335. The cofactor is Mg(2+).

It localises to the cytoplasm. The protein localises to the nucleus. It carries out the reaction Exonucleolytic cleavage of poly(A) to 5'-AMP.. Functionally, poly(A) nuclease with 3'-5' RNase activity. Catalytic component of the CCR4-NOT complex which is one of the major cellular mRNA deadenylases and is linked to various cellular processes including bulk mRNA degradation, miRNA-mediated repression, translational repression during translational initiation and general transcription regulation. Additional complex functions may be a consequence of its influence on mRNA expression. Involved in mRNA decay mediated by the major-protein-coding determinant of instability (mCRD) of the FOS gene in the cytoplasm. In the presence of ZNF335, enhances ligand-dependent transcriptional activity of nuclear hormone receptors. Mediates cell proliferation and cell survival and prevents cellular senescence. This Mus musculus (Mouse) protein is CCR4-NOT transcription complex subunit 6 (Cnot6).